A 172-amino-acid polypeptide reads, in one-letter code: MLLPNILLTGTPGVGKTTLGKELASKSGLKYINVGDLAREEQLYDGYDEEYDCPILDEDRVVDELDNQMREGGVIVDYHGCDFFPERWFHIVFVLRTDTNVLYERLETRGYNEKKLTDNIQCEIFQVLYEEATASYKEEIVHQLPSNKPEELENNVDQILKWIEQWIKDHNS.

The ATP site is built by Gly13, Gly15, Lys16, Thr17, and Thr18. The tract at residues 33 to 56 (NVGDLAREEQLYDGYDEEYDCPIL) is NMP. The segment at 33–56 (NVGDLAREEQLYDGYDEEYDCPIL) is NMPbind. Residues 108 to 118 (TRGYNEKKLTD) are LID. The ATP site is built by Arg109 and Lys148.

Belongs to the adenylate kinase family. AK6 subfamily. As to quaternary structure, monomer and homodimer. Interacts with small ribosomal subunit protein uS11. Not a structural component of 43S pre-ribosomes, but transiently interacts with them by binding to uS11. Interacts with COIL (via C-terminus). In terms of tissue distribution, expressed in heart, brain, placenta, lung, liver, skeletal muscle, kidney, pancreas, chorionic villi and the central nervous system.

It is found in the cytoplasm. It localises to the nucleus. The protein resides in the nucleoplasm. The protein localises to the cajal body. It catalyses the reaction AMP + ATP = 2 ADP. It carries out the reaction ATP + H2O = ADP + phosphate + H(+). Its function is as follows. Broad-specificity nucleoside monophosphate (NMP) kinase that catalyzes the reversible transfer of the terminal phosphate group between nucleoside triphosphates and monophosphates. Also has ATPase activity. Involved in the late cytoplasmic maturation steps of the 40S ribosomal particles, specifically 18S rRNA maturation. While NMP activity is not required for ribosome maturation, ATPase activity is. Associates transiently with small ribosomal subunit protein uS11. ATP hydrolysis breaks the interaction with uS11. May temporarily remove uS11 from the ribosome to enable a conformational change of the ribosomal RNA that is needed for the final maturation step of the small ribosomal subunit. Its NMP activity may have a role in nuclear energy homeostasis. AMP and dAMP are the preferred substrates, but CMP and dCMP are also good substrates. IMP is phosphorylated to a much lesser extent. All nucleoside triphosphates ATP, GTP, UTP, CTP, dATP, dCTP, dGTP, and TTP are accepted as phosphate donors. CTP is the best phosphate donor, followed by UTP, ATP, GTP and dCTP. May be involved in regulation of Cajal body (CB) formation. This Homo sapiens (Human) protein is Adenylate kinase isoenzyme 6.